A 554-amino-acid polypeptide reads, in one-letter code: Glutamine--tRNA ligase (554 aa).

A 'HIGH' region motif is present at residues 34–44; that stretch reads PEPNGYLHIGH. Residues 35-37 and 41-47 contribute to the ATP site; these read EPN and HIGHAKS. L-glutamine is bound by residues Asp67 and Tyr212. ATP-binding positions include Thr231, 261 to 262, and 269 to 271; these read RL and MSK. The 'KMSKS' region signature appears at 268–272; that stretch reads VMSKR. Positions 317-324 are interaction with tRNA; it reads TKQDNTIE.

Belongs to the class-I aminoacyl-tRNA synthetase family. In terms of assembly, monomer.

Its subcellular location is the cytoplasm. It catalyses the reaction tRNA(Gln) + L-glutamine + ATP = L-glutaminyl-tRNA(Gln) + AMP + diphosphate. This is Glutamine--tRNA ligase from Escherichia coli O157:H7.